The primary structure comprises 145 residues: Methylglyoxal synthase (145 aa).

In terms of domain architecture, MGS-like spans 1-145 (MNSKKKIALV…YYQKIRKDNF (145 aa)). Residues His12, Lys16, 38-41 (TGTT), and 58-59 (SG) contribute to the substrate site. The active-site Proton donor/acceptor is the Asp64. A substrate-binding site is contributed by His91.

Belongs to the methylglyoxal synthase family.

It carries out the reaction dihydroxyacetone phosphate = methylglyoxal + phosphate. Its function is as follows. Catalyzes the formation of methylglyoxal from dihydroxyacetone phosphate. The polypeptide is Methylglyoxal synthase (Clostridium acetobutylicum (strain ATCC 824 / DSM 792 / JCM 1419 / IAM 19013 / LMG 5710 / NBRC 13948 / NRRL B-527 / VKM B-1787 / 2291 / W)).